The chain runs to 490 residues: Aspartyl/glutamyl-tRNA(Asn/Gln) amidotransferase subunit B (490 aa).

It belongs to the GatB/GatE family. GatB subfamily. Heterotrimer of A, B and C subunits.

The catalysed reaction is L-glutamyl-tRNA(Gln) + L-glutamine + ATP + H2O = L-glutaminyl-tRNA(Gln) + L-glutamate + ADP + phosphate + H(+). It catalyses the reaction L-aspartyl-tRNA(Asn) + L-glutamine + ATP + H2O = L-asparaginyl-tRNA(Asn) + L-glutamate + ADP + phosphate + 2 H(+). In terms of biological role, allows the formation of correctly charged Asn-tRNA(Asn) or Gln-tRNA(Gln) through the transamidation of misacylated Asp-tRNA(Asn) or Glu-tRNA(Gln) in organisms which lack either or both of asparaginyl-tRNA or glutaminyl-tRNA synthetases. The reaction takes place in the presence of glutamine and ATP through an activated phospho-Asp-tRNA(Asn) or phospho-Glu-tRNA(Gln). The polypeptide is Aspartyl/glutamyl-tRNA(Asn/Gln) amidotransferase subunit B (Burkholderia pseudomallei (strain 1106a)).